Here is a 312-residue protein sequence, read N- to C-terminus: Ribose-phosphate pyrophosphokinase (312 aa).

Residues 34 to 36 (DQE) and 93 to 94 (RQ) each bind ATP. Residues His-127 and Asp-167 each contribute to the Mg(2+) site. Lys-191 is an active-site residue. Residues Arg-193, Asp-217, and 221–225 (DSGGT) each bind D-ribose 5-phosphate.

This sequence belongs to the ribose-phosphate pyrophosphokinase family. Class I subfamily. As to quaternary structure, homohexamer. The cofactor is Mg(2+).

Its subcellular location is the cytoplasm. The catalysed reaction is D-ribose 5-phosphate + ATP = 5-phospho-alpha-D-ribose 1-diphosphate + AMP + H(+). It functions in the pathway metabolic intermediate biosynthesis; 5-phospho-alpha-D-ribose 1-diphosphate biosynthesis; 5-phospho-alpha-D-ribose 1-diphosphate from D-ribose 5-phosphate (route I): step 1/1. Functionally, involved in the biosynthesis of the central metabolite phospho-alpha-D-ribosyl-1-pyrophosphate (PRPP) via the transfer of pyrophosphoryl group from ATP to 1-hydroxyl of ribose-5-phosphate (Rib-5-P). The protein is Ribose-phosphate pyrophosphokinase of Hyphomonas neptunium (strain ATCC 15444).